The following is an 871-amino-acid chain: Translation initiation factor IF-2 (871 aa).

The segment at 1–242 (MVDTKNPGDK…PAAKPAPAKQ (242 aa)) is disordered. The segment covering 68-91 (PASARTPAAKAPPARAATPAAPRA) has biased composition (low complexity). Residues 115–174 (AKVRAEEERRIAEAEAARRNSKEGIEQAEREAAEARRKAEEERHRQEEEAKRKAEIEAKR) show a composition bias toward basic and acidic residues. Low complexity-rich tracts occupy residues 182 to 206 (KPAP…AVAA) and 225 to 241 (ARPV…APAK). The region spanning 367–538 (PRSPVVTVMG…SLQADLLDLK (172 aa)) is the tr-type G domain. The segment at 376 to 383 (GHVDHGKT) is G1. 376-383 (GHVDHGKT) is a GTP binding site. The tract at residues 401–405 (GITQH) is G2. A G3 region spans residues 424 to 427 (DTPG). Residues 424–428 (DTPGH) and 478–481 (NKID) each bind GTP. The tract at residues 478-481 (NKID) is G4. Positions 514-516 (SAK) are G5.

The protein belongs to the TRAFAC class translation factor GTPase superfamily. Classic translation factor GTPase family. IF-2 subfamily.

Its subcellular location is the cytoplasm. Functionally, one of the essential components for the initiation of protein synthesis. Protects formylmethionyl-tRNA from spontaneous hydrolysis and promotes its binding to the 30S ribosomal subunits. Also involved in the hydrolysis of GTP during the formation of the 70S ribosomal complex. This chain is Translation initiation factor IF-2, found in Nitrobacter winogradskyi (strain ATCC 25391 / DSM 10237 / CIP 104748 / NCIMB 11846 / Nb-255).